We begin with the raw amino-acid sequence, 490 residues long: MKHLLLLRLVLPKPNYILRRSFLFHSGKTTPSPLDPYDTLQRRVARSGDPSASIIKVLDGWLDQGNLVKTSELHSIIKMLRKFSRFSHALQISDWMSEHRVHEISEGDVAIRLDLIAKVGGLGEAEKFFETIPMERRNYHLYGALLNCYASKKVLHKAEQVFQEMKELGFLKGCLPYNVMLNLYVRTGKYTMVEKLLREMEDETVKPDIFTVNTRLHAYSVVSDVEGMEKFLMRCEADQGLHLDWRTYADTANGYIKAGLTEKALEMLRKSEQMVNAQKRKHAYEVLMSFYGAAGKKEEVYRLWSLYKELDGFYNTGYISVISALLKMDDIEEVEKIMEEWEAGHSLFDIRIPHLLITGYCKKGMMEKAEEVVNILVQKWRVEDTSTWERLALGYKMAGKMEKAVEKWKRAIEVSKPGWRPHQVVLMSCVDYLEGQRDMEGLRKILRLLSERGHISYDQLLYDMNGAGLSWKIVDAMGKGRYVEEREVRI.

Residues 1–86 (MKHLLLLRLV…IKMLRKFSRF (86 aa)) constitute a mitochondrion transit peptide. 8 PPR repeats span residues 138 to 172 (NYHL…GFLK), 173 to 207 (GCLP…TVKP), 208 to 243 (DIFT…GLHL), 244 to 274 (DWRT…SEQM), 280 to 310 (RKHA…YKEL), 314 to 344 (YNTG…WEAG), 349 to 379 (DIRI…LVQK), and 384 to 421 (DTST…GWRP).

Belongs to the PPR family. P subfamily.

It localises to the mitochondrion. This Arabidopsis thaliana (Mouse-ear cress) protein is Pentatricopeptide repeat-containing protein At2g20710, mitochondrial.